A 290-amino-acid chain; its full sequence is Small ribosomal subunit biogenesis GTPase RsgA (290 aa).

In terms of domain architecture, CP-type G spans 62-213 (KNSLVRPPIV…IADTPGFSSL (152 aa)). GTP contacts are provided by residues 111 to 114 (SKLD) and 156 to 164 (GQTGVGKST). Positions 237, 242, 244, and 250 each coordinate Zn(2+).

It belongs to the TRAFAC class YlqF/YawG GTPase family. RsgA subfamily. In terms of assembly, monomer. Associates with 30S ribosomal subunit, binds 16S rRNA. Zn(2+) is required as a cofactor.

The protein localises to the cytoplasm. Its function is as follows. One of several proteins that assist in the late maturation steps of the functional core of the 30S ribosomal subunit. Helps release RbfA from mature subunits. May play a role in the assembly of ribosomal proteins into the subunit. Circularly permuted GTPase that catalyzes slow GTP hydrolysis, GTPase activity is stimulated by the 30S ribosomal subunit. This Streptococcus agalactiae serotype III (strain NEM316) protein is Small ribosomal subunit biogenesis GTPase RsgA.